Consider the following 87-residue polypeptide: MNKKYAKKFKKKPCQFCEAKLFYIDYKDIEVLQRFINTFGKIQPSRITGNCAKHQRKLALAVKRARFVALLPFIGDRIRGNYDKTRV.

Belongs to the bacterial ribosomal protein bS18 family. Part of the 30S ribosomal subunit. Forms a tight heterodimer with protein bS6.

Its function is as follows. Binds as a heterodimer with protein bS6 to the central domain of the 16S rRNA, where it helps stabilize the platform of the 30S subunit. The chain is Small ribosomal subunit protein bS18 from Mesomycoplasma hyopneumoniae (strain 232) (Mycoplasma hyopneumoniae).